The chain runs to 65 residues: Large ribosomal subunit protein uL29 (65 aa).

This sequence belongs to the universal ribosomal protein uL29 family.

The protein is Large ribosomal subunit protein uL29 of Buchnera aphidicola subsp. Cinara cedri (strain Cc).